Consider the following 1861-residue polypeptide: MVDKNIYIIQGEINIVVGAIKRNARWSTHIPLDEERDPLLHSFSNLKEVLNSVTELSEIEPNVFLRPFLEVIRSEDTTGPITGLALTSVNKFLSYALIDPTHEGTAEGMENMADAVTHARFVGTDPASDEVVLMKILQVLRTLLLTPVGTHLTNESVCEIMQSCFRICFEMRLSELLRKSAEHTLVDMVQLLFTRLPQFKEEPKSYVGTNMKKLKMRAGGMSDSSKWKKQKRSPRPPRHTTKVTPGSELPTPNGATLPSNLTGGVPFIDAPTSISSASSEAASTVVSPCTDSGLELSSQTTSKEDLTDLEQAGSPREITTSEPGSSEMGASDQLDPQEGAHVEKAQSASVESIPEVLEECTSPADHSDSASVHDMDYVNPRGVRFTQSSQKEGTALVPYGLPCIRELFRFLISLTNPHDRHNSEVMIHMGLHLLTVALESAPVAQCQTLLGLIKDEMCRHLFQLLSVERLNLYAASLRVCFLLFESMREHLKFQLEMYIKKLMEIITVENPKMPYEMKEMALEAVVQLWRIPSFVTELYINYDCDYYCSNLFEDLTKLLSKNAFPVSGQLYTTHLLSLDALLTVIDSTESHCQAKVLNTLNQQEKKETARPGFEAVDGNPETNKSERATSDGKSTGVALDARGLHFPSGGWLSTEHGKPGCRDLEEAGDSGADKKFTRKPPRFSCLLPDPRELIEIKNKKKLLITGTEQFNQKPKKGIQFLQEKGLLTIPMDNTEVAQWLRENPRLDKKMIGEFVSDRKNMDLLESFVSTFSFQGLRLDEALRLYLEAFRLPGEAPVIHRLLEVFTEHWRSCNGSPFANSDACFALAYAVIMLNTDQHNHNVRKQNAPMTLEEFRKNLKGVNGGKDFEQDILEDMYHAIKNEEIVMPEEQTGLVRENYVWSVLLHRGASPEGVFLRVPPGSYDLDLFTMTWGPTIAALSYVFDKSLEETIIQKAISGFRKCAMISAHYGLSDVFDNLIISLCKFTALSSESIENLPSVFGSNPKAHIAAKTVFHLAHRHGDILREGWKNIMEAMLQLFRAQLLPKAMVEVEDFVDPNGKISLQREETPSNRGESTVLSFVSWLTLSGPEQSSVRGPSTENQEAKRVALDCIKQCDPEKMITESKFLQLESLQELMKALVSVTPDEETYDEEDAAFCLEMLLRIVLENRDRVGCVWQTVRDHLYHLCVQAQDFCFLVERAVVGLLRLAIRLLRREEISGQVLLSLRILLLMKPSVLSRVSHQVAYGLHELLKTNAANIHSGDDWATLFTLLECIGSGVKPPDALQATARADAPDAGAQSDSELPSYHQNDVSLDRGYTSDSEVYTDHGRPGKIHRSATDADMVNSGWLVVGKDDIDNSKPGAGLSRPGPSPLVNQYSLTVGLDLGPHDTKSLLKCVESLSFIVRDAAHITPDNFELCVKTLRIFVEASLNGGCKSQDKRSKSHKYDSKGNRFKKKPKEGSMLRRPRGSNQHATRGGHSDEEEDEGVPASYHTVSLQVSQDLLDLMHTLHTRAASIYSSWAEEQRHLEGGGQKIEADSRTLWAHCWCPLLQGIACLCCDARRQVRMQALTYLQRALLVHDLQKLDALEWESCFNKVLFPLLTKLLENISPADVGGMEETRMRASTLLSKVFLQHLSPLLSLSTFAALWLTILDFMDKYMHAGSSDLLSEAIPESLKNMLLVMDTAEIFHSADARGGGPSALWEITWERIDCFLPHLRDELFKQTVIQDPMPAEPHSQKPLASTHLTSAAGDPRMPGHPPLPEIPSEMGVCDSEKPESTRAPSSSSPGSPMASSPSKLSPAQEGPPPLTQPPLILQPLTSPLQVGVPPMTLPIILNPALIEATSPVPLLATPRPTDPIPTSEVN.

The DCB; DCB:DCB domain and DCB:HUS domain interaction stretch occupies residues 1–211 (MVDKNIYIIQ…EPKSYVGTNM (211 aa)). The segment at 1–380 (MVDKNIYIIQ…SVHDMDYVNP (380 aa)) is interaction with RAB1B. Disordered regions lie at residues 210–264 (NMKK…LTGG) and 289–353 (CTDS…VESI). The span at 227 to 241 (WKKQKRSPRPPRHTT) shows a compositional bias: basic residues. Residues 253 to 262 (NGATLPSNLT) show a composition bias toward polar residues. Residues S349 and S352 each carry the phosphoserine modification. T507 bears the Phosphothreonine mark. Residues 530 to 550 (RIPSFVTELYINYDCDYYCSN) form an HUS; DCB:HUS domain interaction region. Residues 603 to 634 (QEKKETARPGFEAVDGNPETNKSERATSDGKS) are disordered. Residues 692-882 (ELIEIKNKKK…EDMYHAIKNE (191 aa)) form the SEC7 domain. Residues 886-1372 (MPEEQTGLVR…LSRPGPSPLV (487 aa)) are phosphatidylinositol-phosphate binding; required for translocation to the leading edge and for ARF1 activation upon GPCR signaling. Residues 1286-1296 (TARADAPDAGA) show a composition bias toward low complexity. The interval 1286-1335 (TARADAPDAGAQSDSELPSYHQNDVSLDRGYTSDSEVYTDHGRPGKIHRS) is disordered. Positions 1297-1310 (QSDSELPSYHQNDV) are enriched in polar residues. Position 1298 is a phosphoserine (S1298). The residue at position 1316 (Y1316) is a Phosphotyrosine. 3 positions are modified to phosphoserine: S1318, S1320, and S1335. A Phosphothreonine modification is found at T1337. Disordered stretches follow at residues 1431 to 1486 (GCKS…EGVP) and 1727 to 1812 (PMPA…PLIL). The span at 1434 to 1448 (SQDKRSKSHKYDSKG) shows a compositional bias: basic and acidic residues. S1477, S1775, and S1786 each carry phosphoserine. Low complexity predominate over residues 1776–1793 (TRAPSSSSPGSPMASSPS).

Can form homodimers and probably homotetramers. Interacts with COPG1; the interaction is independent on ARF1 activation. Interacts with ARF1, ARF3, ARF4 and ARF5. Interacts with RAB1B (GTP-bound form); required for GBF1 membrane association. Interacts with GGA1, GGA2 and GGA3. Interacts with USO1. Interacts (via SEC7 domain) with PNPLA2 (via C-terminus); the interaction is direct. Interacts with ARMH3.

It localises to the golgi apparatus. It is found in the cis-Golgi network. The protein localises to the endoplasmic reticulum-Golgi intermediate compartment. Its subcellular location is the trans-Golgi network. The protein resides in the cytoplasm. It localises to the lipid droplet. It is found in the membrane. Functionally, guanine-nucleotide exchange factor (GEF) for members of the Arf family of small GTPases involved in trafficking in the early secretory pathway; its GEF activity initiates the coating of nascent vesicles via the localized generation of activated ARFs through replacement of GDP with GTP. Recruitment to cis-Golgi membranes requires membrane association of Arf-GDP and can be regulated by ARF1, ARF3, ARF4 and ARF5. Involved in the recruitment of the COPI coat complex to the endoplasmic reticulum exit sites (ERES), and the endoplasmic reticulum-Golgi intermediate (ERGIC) and cis-Golgi compartments which implicates ARF1 activation. Involved in COPI vesicle-dependent retrograde transport from the ERGIC and cis-Golgi compartments to the endoplasmic reticulum (ER). Involved in the trans-Golgi network recruitment of GGA1, GGA2, GGA3, BIG1, BIG2, and the AP-1 adaptor protein complex related to chlathrin-dependent transport; the function requires its GEF activity (probably at least in part on ARF4 and ARF5). Has GEF activity towards ARF1. Has in vitro GEF activity towards ARF5. Involved in the processing of PSAP. Required for the assembly of the Golgi apparatus. The AMPK-phosphorylated form is involved in Golgi disassembly during mitotis and under stress conditions. May be involved in the COPI vesicle-dependent recruitment of PNPLA2 to lipid droplets; however, this function is under debate. In neutrophils, involved in G protein-coupled receptor (GPCR)-mediated chemotaxis und superoxide production. Proposed to be recruited by phosphatidylinositol-phosphates generated upon GPCR stimulation to the leading edge where it recruits and activates ARF1, and is involved in recruitment of GIT2 and the NADPH oxidase complex. Plays a role in maintaining mitochondrial morphology. This is Golgi-specific brefeldin A-resistance guanine nucleotide exchange factor 1 from Mus musculus (Mouse).